We begin with the raw amino-acid sequence, 218 residues long: Adenylate kinase (218 aa).

Position 10 to 15 (10 to 15 (GAGKGT)) interacts with ATP. Positions 30 to 59 (STGDMLRAAVKAGTPLGVEAKKIMDAGALV) are NMP. Residues T31, R36, 57-59 (ALV), 85-88 (GFPR), and Q92 each bind AMP. The tract at residues 122 to 159 (GRRSHTASGRTYHVKYNPPKVEGKDDVTGEPLIQREDD) is LID. ATP contacts are provided by residues R123 and 132–133 (TY). AMP is bound by residues R156 and R167. G203 lines the ATP pocket.

Belongs to the adenylate kinase family. As to quaternary structure, monomer.

The protein localises to the cytoplasm. It catalyses the reaction AMP + ATP = 2 ADP. It functions in the pathway purine metabolism; AMP biosynthesis via salvage pathway; AMP from ADP: step 1/1. Its function is as follows. Catalyzes the reversible transfer of the terminal phosphate group between ATP and AMP. Plays an important role in cellular energy homeostasis and in adenine nucleotide metabolism. This chain is Adenylate kinase, found in Polaromonas sp. (strain JS666 / ATCC BAA-500).